A 428-amino-acid chain; its full sequence is G2/mitotic-specific cyclin-1 (428 aa).

The interval 1–22 (MKFSEEKNVSNNPTNFEGGLDS) is disordered.

This sequence belongs to the cyclin family. Cyclin AB subfamily. As to quaternary structure, interacts with the CDC2 protein kinase to form a serine/threonine kinase holoenzyme complex also known as maturation promoting factor (MPF). The cyclin subunit imparts substrate specificity to the complex.

Functionally, essential for the control of the cell cycle at the G2/M (mitosis) transition. The polypeptide is G2/mitotic-specific cyclin-1 (Medicago sativa subsp. varia (Alfalfa)).